The following is a 562-amino-acid chain: NAD-dependent malic enzyme (562 aa).

Tyr-101 serves as the catalytic Proton donor. Arg-154 serves as a coordination point for NAD(+). The active-site Proton acceptor is Lys-172. Residues Glu-243, Asp-244, and Asp-267 each coordinate a divalent metal cation. NAD(+) contacts are provided by Asp-267 and Asn-415.

This sequence belongs to the malic enzymes family. As to quaternary structure, homotetramer. Requires Mg(2+) as cofactor. Mn(2+) serves as cofactor.

The catalysed reaction is (S)-malate + NAD(+) = pyruvate + CO2 + NADH. It catalyses the reaction oxaloacetate + H(+) = pyruvate + CO2. The sequence is that of NAD-dependent malic enzyme from Shewanella frigidimarina (strain NCIMB 400).